The following is an 89-amino-acid chain: MKGLAAALLVLVCTMALCSCAQVGTNKELCCLVYTSWQIPQKFIVDYSETSPQCPKPGVILLTKRGRQICADPNKKWVQKYISDLKLNA.

Residues 1-20 (MKGLAAALLVLVCTMALCSC) form the signal peptide. 2 disulfides stabilise this stretch: Cys30–Cys54 and Cys31–Cys70.

The protein belongs to the intercrine beta (chemokine CC) family. In terms of processing, the Cys-30/Cys-54 disulfide bond is required for activity. Expressed at high levels in lung, lymph nodes, placenta, bone marrow, dendritic cells present in germinal centers and T-cell areas of secondary lymphoid organs and macrophages derived from peripheral blood monocytes. Not expressed by peripheral blood monocytes and a monocyte-to-macrophage differentiation is a prerequisite for expression. Expressed in synovial fluids from patients with rheumatoid and septic arthritis and in ovarian carcinoma ascitic fluid.

The protein resides in the secreted. Functionally, chemotactic factor that attracts lymphocytes but not monocytes or granulocytes. May be involved in B-cell migration into B-cell follicles in lymph nodes. Attracts naive T-lymphocytes toward dendritic cells and activated macrophages in lymph nodes, has chemotactic activity for naive T-cells, CD4+ and CD8+ T-cells and thus may play a role in both humoral and cell-mediated immunity responses. The chain is C-C motif chemokine 18 (CCL18) from Homo sapiens (Human).